The following is a 232-amino-acid chain: Lipopolysaccharide core heptose(II) kinase WaaY (232 aa).

It belongs to the protein kinase superfamily. RfaY/WaaY family.

The catalysed reaction is alpha-D-Glc-(1-&gt;3)-[L-alpha-D-Hep-(1-&gt;7)]-L-alpha-D-Hep-(1-&gt;3)-4-O-PO3(2-)-L-alpha-D-Hep-(1-&gt;5)-[alpha-Kdo-(2-&gt;4)]-alpha-Kdo-(2-&gt;6)-lipid A + ATP = alpha-D-Glc-(1-&gt;3)-[L-alpha-D-Hep-(1-&gt;7)]-4-O-PO3(2-)-L-alpha-D-Hep-(1-&gt;3)-4-O-PO3(2-)-L-alpha-D-Hep-(1-&gt;5)-[alpha-Kdo-(2-&gt;4)]-alpha-Kdo-(2-&gt;6)-lipid A + ADP + H(+). The protein operates within bacterial outer membrane biogenesis; LPS core biosynthesis. Kinase involved in the biosynthesis of the core oligosaccharide region of lipopolysaccharide (LPS). Catalyzes the phosphorylation of the second heptose unit (HepII) of the inner core. This Salmonella typhimurium (strain LT2 / SGSC1412 / ATCC 700720) protein is Lipopolysaccharide core heptose(II) kinase WaaY.